Here is a 201-residue protein sequence, read N- to C-terminus: Ribosome maturation factor RimM (201 aa).

Residues Glu-94–Leu-168 enclose the PRC barrel domain. Positions Pro-164–Ser-201 are disordered. Over residues Gly-180–Gly-194 the composition is skewed to acidic residues.

This sequence belongs to the RimM family. In terms of assembly, binds ribosomal protein uS19.

It is found in the cytoplasm. An accessory protein needed during the final step in the assembly of 30S ribosomal subunit, possibly for assembly of the head region. Essential for efficient processing of 16S rRNA. May be needed both before and after RbfA during the maturation of 16S rRNA. It has affinity for free ribosomal 30S subunits but not for 70S ribosomes. The protein is Ribosome maturation factor RimM of Rhodospirillum rubrum (strain ATCC 11170 / ATH 1.1.1 / DSM 467 / LMG 4362 / NCIMB 8255 / S1).